Consider the following 206-residue polypeptide: Large ribosomal subunit protein uL4 (206 aa).

Residues 47–77 (GTHDTKTRGEVSGGGRKPWRQKGTGRARHGS) form a disordered region. Positions 63–77 (KPWRQKGTGRARHGS) are enriched in basic residues.

Belongs to the universal ribosomal protein uL4 family. In terms of assembly, part of the 50S ribosomal subunit.

Functionally, one of the primary rRNA binding proteins, this protein initially binds near the 5'-end of the 23S rRNA. It is important during the early stages of 50S assembly. It makes multiple contacts with different domains of the 23S rRNA in the assembled 50S subunit and ribosome. Forms part of the polypeptide exit tunnel. The polypeptide is Large ribosomal subunit protein uL4 (Carboxydothermus hydrogenoformans (strain ATCC BAA-161 / DSM 6008 / Z-2901)).